The sequence spans 91 residues: MQRNLVVLLFLGMVALSSCGFREKHFQRFVKYAVPESTLRTVLQTVVHKVGKTQFGCSAYQGYCDDHCQDIEKKEGFCHGFKCKCGIPMGF.

The signal sequence occupies residues 1–19 (MQRNLVVLLFLGMVALSSC). The BetaSPN-type CS-alpha/beta domain occupies 54-91 (QFGCSAYQGYCDDHCQDIEKKEGFCHGFKCKCGIPMGF). Intrachain disulfides connect Cys-57/Cys-78, Cys-64/Cys-83, and Cys-68/Cys-85.

It belongs to the long chain scorpion toxin family. Class 1 subfamily. Expressed by the venom gland.

It localises to the secreted. In terms of biological role, has a low affinity binding to potassium channels of rat brain synaptosomes. Displays weak antibacterial activity against Stenotrophomonas sp. Strongly inhibits the development of the Plasmodium berghei ookinetes. Displays slight hemolytic effect on mouse erythrocytes. Induces cytolysis on Xenopus oocytes at high concentrations. Is not toxic towards mice and towards the insect Tenebrio molitor. This chain is Potassium channel toxin MeuTXK-beta-2, found in Mesobuthus eupeus (Lesser Asian scorpion).